The following is an 82-amino-acid chain: Transcription elongation factor 1 homolog (82 aa).

4 residues coordinate Zn(2+): Cys-26, Cys-29, Cys-50, and Cys-53.

This sequence belongs to the ELOF1 family.

The protein resides in the nucleus. Its function is as follows. Transcription elongation factor implicated in the maintenance of proper chromatin structure in actively transcribed regions. In Drosophila melanogaster (Fruit fly), this protein is Transcription elongation factor 1 homolog.